A 598-amino-acid polypeptide reads, in one-letter code: Aspartate--tRNA ligase (598 aa).

L-aspartate is bound at residue E175. Residues Q199–K202 are aspartate. R221 is an L-aspartate binding site. Residues R221 to E223 and Q230 each bind ATP. H450 is an L-aspartate binding site. An ATP-binding site is contributed by E486. R493 contributes to the L-aspartate binding site. Position 538–541 (G538–R541) interacts with ATP.

It belongs to the class-II aminoacyl-tRNA synthetase family. Type 1 subfamily. In terms of assembly, homodimer.

It localises to the cytoplasm. The enzyme catalyses tRNA(Asp) + L-aspartate + ATP = L-aspartyl-tRNA(Asp) + AMP + diphosphate. Functionally, catalyzes the attachment of L-aspartate to tRNA(Asp) in a two-step reaction: L-aspartate is first activated by ATP to form Asp-AMP and then transferred to the acceptor end of tRNA(Asp). The sequence is that of Aspartate--tRNA ligase from Lactiplantibacillus plantarum (strain ATCC BAA-793 / NCIMB 8826 / WCFS1) (Lactobacillus plantarum).